Consider the following 145-residue polypeptide: Nicking endonuclease (145 aa).

The tract at residues 126–145 (NPQEKTQVKTETKSGFARFL) is disordered.

Its function is as follows. Endonuclease responsible for the single-chain interruptions (nicks) located at specific positions in the minus strand of the viral genome. This chain is Nicking endonuclease, found in Escherichia phage T5 (Enterobacteria phage T5).